The following is a 314-amino-acid chain: uncharacterized protein (314 aa).

The next 2 membrane-spanning stretches (helical) occupy residues 23-43 (LALG…MALF) and 98-118 (MASG…GPLT). Over residues 165 to 184 (GLGSGAGGGDVGGGGAGGTT) the composition is skewed to gly residues. Positions 165 to 314 (GLGSGAGGGD…APDEKTDAGE (150 aa)) are disordered. A compositionally biased stretch (pro residues) spans 190–202 (GPPPVPTSSPPTT). 2 stretches are compositionally biased toward low complexity: residues 203–212 (PAGAPTKSAT) and 219–232 (ASPA…AGMP). A helical membrane pass occupies residues 221–241 (PASAHMGAAGMPMVPPGAMGA). Positions 294–314 (LLPEHKDFGRIAPDEKTDAGE) are enriched in basic and acidic residues.

Its subcellular location is the cell membrane. This is an uncharacterized protein from Mycobacterium tuberculosis (strain CDC 1551 / Oshkosh).